The sequence spans 205 residues: MMRTLITTHPLPLLLLPQQLLQLVQFQEVDTDFDFPEEDKKEEFEECLEKFFSTGPARPPTKEKVKRRVLIEPGMPLNHIEYCNHEIMGKNVYYKHRWVAEHYFLLMQYDELQKICYNRFVPCKNGIRKCNRSKGLVEGVYCNLTEAFEIPACKYESLYRKGYVLITCSWQNEMQKRIPHTINDLVEPPEHRSFLSEDGVFVISP.

The signal sequence occupies residues 1 to 26 (MMRTLITTHPLPLLLLPQQLLQLVQF). Intrachain disulfides connect C116–C168 and C123–C130. N-linked (GlcNAc...) asparagine glycans are attached at residues N131 and N143.

This sequence belongs to the pancreatic ribonuclease family. As to expression, at the mRNA level, widely expressed. At protein level, restricted to epididymis. Expressed in spermatozoa (sperm head and neck), with higher levels on ejaculated and epididymal sperm than on testicular sperm (at protein level). Expressed in the epithelial cells of the epididymal tubule (at protein level). Not detected in muscle.

It localises to the secreted. Functionally, does not exhibit any ribonuclease activity. In Homo sapiens (Human), this protein is Inactive ribonuclease-like protein 9 (RNASE9).